The sequence spans 420 residues: Gamma-glutamyl phosphate reductase (420 aa).

This sequence belongs to the gamma-glutamyl phosphate reductase family.

It localises to the cytoplasm. It catalyses the reaction L-glutamate 5-semialdehyde + phosphate + NADP(+) = L-glutamyl 5-phosphate + NADPH + H(+). It participates in amino-acid biosynthesis; L-proline biosynthesis; L-glutamate 5-semialdehyde from L-glutamate: step 2/2. In terms of biological role, catalyzes the NADPH-dependent reduction of L-glutamate 5-phosphate into L-glutamate 5-semialdehyde and phosphate. The product spontaneously undergoes cyclization to form 1-pyrroline-5-carboxylate. This Streptococcus pneumoniae serotype 2 (strain D39 / NCTC 7466) protein is Gamma-glutamyl phosphate reductase.